A 191-amino-acid polypeptide reads, in one-letter code: MKKQLLAALIGGSLLAPMAASAADYVIDREGAHASITFKVSHLGYSYVVGRFNDFSGDFSYDAKNPTAAKVNVKVNTLSVDSNHAERDKHIRSGDFLNTAKFAEATFVSTSVEDKGNGDMVITGNFTLNGVTKPLAIQAHAVGEGQDPWGGYRAGFIGTTTFAMKDYGIKMDLGPASANVELDLVVEGVRK.

Residues 1–22 form the signal peptide; it reads MKKQLLAALIGGSLLAPMAASA.

This sequence belongs to the UPF0312 family. Type 1 subfamily.

The protein localises to the periplasm. The polypeptide is UPF0312 protein Shewmr4_1178 (Shewanella sp. (strain MR-4)).